The primary structure comprises 966 residues: Regulator of telomere elongation helicase 1 homolog (966 aa).

The Helicase ATP-binding domain occupies 7-284 (AGIPVHFPFE…QDMAGDEPKD (278 aa)). 42–49 (SPTGTGKT) contacts ATP. Cys-146, Cys-164, Cys-173, and Cys-209 together coordinate [4Fe-4S] cluster. Positions 233 to 236 (DEAH) match the DEAH box motif. A disordered region spans residues 844-864 (VKIHKRERSSPTAPESTSQVS). The segment covering 853–863 (SPTAPESTSQV) has biased composition (polar residues). Thr-855 carries the phosphothreonine modification.

This sequence belongs to the helicase family. RAD3/XPD subfamily.

It is found in the nucleus. The enzyme catalyses ATP + H2O = ADP + phosphate + H(+). In terms of biological role, a probable ATP-dependent DNA helicase implicated in DNA repair and the maintenance of genomic stability. Acts as an anti-recombinase to counteract toxic recombination and limit crossover during meiosis. Regulates meiotic recombination and crossover homeostasis by physically dissociating strand invasion events and thereby promotes noncrossover repair by meiotic synthesis dependent strand annealing (SDSA) as well as disassembly of D loop recombination intermediates. The sequence is that of Regulator of telomere elongation helicase 1 homolog from Drosophila sechellia (Fruit fly).